Here is a 184-residue protein sequence, read N- to C-terminus: Putative YfeABCD regulator YfeE (184 aa).

The next 3 helical transmembrane spans lie at 15–35 (IAGW…IINF), 84–104 (LSAG…GLSL), and 162–182 (ILPS…GIMI).

To E.coli YniB.

The protein resides in the cell membrane. Putative regulator of YfeABCD, an ABC transporter locus involved in inorganic iron transport. In Yersinia pestis, this protein is Putative YfeABCD regulator YfeE (yfeE).